A 486-amino-acid chain; its full sequence is Galactose-1-phosphate uridylyltransferase (486 aa).

Belongs to the galactose-1-phosphate uridylyltransferase type 2 family.

It is found in the cytoplasm. It catalyses the reaction alpha-D-galactose 1-phosphate + UDP-alpha-D-glucose = alpha-D-glucose 1-phosphate + UDP-alpha-D-galactose. It functions in the pathway carbohydrate metabolism; galactose metabolism. This chain is Galactose-1-phosphate uridylyltransferase, found in Pediococcus pentosaceus (strain ATCC 25745 / CCUG 21536 / LMG 10740 / 183-1w).